Consider the following 264-residue polypeptide: Small ribosomal subunit protein eS1A (264 aa).

Residues 233-264 are disordered; sequence GEGGGTGKPAGDETGAKVERADGYEPPVQESV. Residues 242-255 are compositionally biased toward basic and acidic residues; the sequence is AGDETGAKVERADG.

This sequence belongs to the eukaryotic ribosomal protein eS1 family. Component of the small ribosomal subunit. Mature ribosomes consist of a small (40S) and a large (60S) subunit. The 40S subunit contains about 33 different proteins and 1 molecule of RNA (18S). The 60S subunit contains about 49 different proteins and 3 molecules of RNA (28S, 5.8S and 5S). Part of the small subunit (SSU) processome, composed of more than 70 proteins and the RNA chaperone small nucleolar RNA (snoRNA) U3.

It localises to the cytoplasm. It is found in the nucleus. The protein localises to the nucleolus. Component of the small ribosomal subunit. The ribosome is a large ribonucleoprotein complex responsible for the synthesis of proteins in the cell. Part of the small subunit (SSU) processome, first precursor of the small eukaryotic ribosomal subunit. During the assembly of the SSU processome in the nucleolus, many ribosome biogenesis factors, an RNA chaperone and ribosomal proteins associate with the nascent pre-rRNA and work in concert to generate RNA folding, modifications, rearrangements and cleavage as well as targeted degradation of pre-ribosomal RNA by the RNA exosome. May play a role during erythropoiesis. The polypeptide is Small ribosomal subunit protein eS1A (rps3a-a) (Xenopus laevis (African clawed frog)).